The primary structure comprises 514 residues: Thymus-specific serine protease (514 aa).

Residues 1 to 24 (MAVWLAQWLGPLLLVSLWGLLAPA) form the signal peptide. Asn-70 and Asn-172 each carry an N-linked (GlcNAc...) asparagine glycan. Ser-185 acts as the Charge relay system in catalysis. Asn-321 carries N-linked (GlcNAc...) asparagine glycosylation. Active-site charge relay system residues include Asp-447 and His-472.

It belongs to the peptidase S28 family. In terms of tissue distribution, expressed predominantly in cortical thymic epithelial cells.

The protein localises to the cytoplasmic vesicle. In terms of biological role, protease that may play a role in T-cell development. The chain is Thymus-specific serine protease (PRSS16) from Homo sapiens (Human).